The sequence spans 248 residues: Triosephosphate isomerase (248 aa).

9-11 (NWK) lines the substrate pocket. The active-site Electrophile is the H94. E166 serves as the catalytic Proton acceptor. Substrate contacts are provided by residues G172, S212, and 233 to 234 (GG).

It belongs to the triosephosphate isomerase family. In terms of assembly, homodimer.

It localises to the cytoplasm. The enzyme catalyses D-glyceraldehyde 3-phosphate = dihydroxyacetone phosphate. It participates in carbohydrate biosynthesis; gluconeogenesis. The protein operates within carbohydrate degradation; glycolysis; D-glyceraldehyde 3-phosphate from glycerone phosphate: step 1/1. Functionally, involved in the gluconeogenesis. Catalyzes stereospecifically the conversion of dihydroxyacetone phosphate (DHAP) to D-glyceraldehyde-3-phosphate (G3P). This is Triosephosphate isomerase from Caldanaerobacter subterraneus subsp. tengcongensis (strain DSM 15242 / JCM 11007 / NBRC 100824 / MB4) (Thermoanaerobacter tengcongensis).